A 154-amino-acid polypeptide reads, in one-letter code: 17 kDa surface antigen (154 aa).

The signal sequence occupies residues 1–19; sequence MKLLSKIMIIALAASMLQA. Residue cysteine 20 is the site of N-palmitoyl cysteine attachment. A lipid anchor (S-diacylglycerol cysteine) is attached at cysteine 20.

Belongs to the rickettsiale 17 kDa surface antigen family.

The protein localises to the cell outer membrane. The sequence is that of 17 kDa surface antigen (omp) from Rickettsia australis.